Here is a 404-residue protein sequence, read N- to C-terminus: NADH-quinone oxidoreductase subunit D 2 (404 aa).

The protein belongs to the complex I 49 kDa subunit family. As to quaternary structure, NDH-1 is composed of 14 different subunits. Subunits NuoB, C, D, E, F, and G constitute the peripheral sector of the complex.

Its subcellular location is the cell inner membrane. It catalyses the reaction a quinone + NADH + 5 H(+)(in) = a quinol + NAD(+) + 4 H(+)(out). Its function is as follows. NDH-1 shuttles electrons from NADH, via FMN and iron-sulfur (Fe-S) centers, to quinones in the respiratory chain. The immediate electron acceptor for the enzyme in this species is believed to be ubiquinone. Couples the redox reaction to proton translocation (for every two electrons transferred, four hydrogen ions are translocated across the cytoplasmic membrane), and thus conserves the redox energy in a proton gradient. The protein is NADH-quinone oxidoreductase subunit D 2 of Rhizobium etli (strain ATCC 51251 / DSM 11541 / JCM 21823 / NBRC 15573 / CFN 42).